Reading from the N-terminus, the 265-residue chain is Mycothiol acetyltransferase (265 aa).

N-acetyltransferase domains lie at 1 to 110 (MDDL…PPLP) and 118 to 265 (VSVR…YVRG). A 1D-myo-inositol 2-(L-cysteinylamino)-2-deoxy-alpha-D-glucopyranoside-binding site is contributed by Asp-3. Acetyl-CoA is bound at residue 44–46 (VQV). Residues Glu-145, Arg-185, and Glu-198 each coordinate 1D-myo-inositol 2-(L-cysteinylamino)-2-deoxy-alpha-D-glucopyranoside. Acetyl-CoA is bound by residues 202–204 (LGV) and 209–215 (HCKGLGK). Tyr-236 contacts 1D-myo-inositol 2-(L-cysteinylamino)-2-deoxy-alpha-D-glucopyranoside.

The protein belongs to the acetyltransferase family. MshD subfamily. As to quaternary structure, monomer.

The enzyme catalyses 1D-myo-inositol 2-(L-cysteinylamino)-2-deoxy-alpha-D-glucopyranoside + acetyl-CoA = mycothiol + CoA + H(+). In terms of biological role, catalyzes the transfer of acetyl from acetyl-CoA to desacetylmycothiol (Cys-GlcN-Ins) to form mycothiol. The polypeptide is Mycothiol acetyltransferase (Segniliparus rotundus (strain ATCC BAA-972 / CDC 1076 / CIP 108378 / DSM 44985 / JCM 13578)).